Here is a 35-residue protein sequence, read N- to C-terminus: Photosystem II reaction center protein T (35 aa).

Residues 3 to 23 (ALVYTFLLVSTLGILFFAIFF) traverse the membrane as a helical segment.

The protein belongs to the PsbT family. In terms of assembly, PSII is composed of 1 copy each of membrane proteins PsbA, PsbB, PsbC, PsbD, PsbE, PsbF, PsbH, PsbI, PsbJ, PsbK, PsbL, PsbM, PsbT, PsbY, PsbZ, Psb30/Ycf12, at least 3 peripheral proteins of the oxygen-evolving complex and a large number of cofactors. It forms dimeric complexes.

Its subcellular location is the plastid. It localises to the chloroplast thylakoid membrane. Found at the monomer-monomer interface of the photosystem II (PS II) dimer, plays a role in assembly and dimerization of PSII. PSII is a light-driven water plastoquinone oxidoreductase, using light energy to abstract electrons from H(2)O, generating a proton gradient subsequently used for ATP formation. In Gnetum gnemon (Spanish joint-fir), this protein is Photosystem II reaction center protein T.